The following is an 830-amino-acid chain: MHYNFKEVERDVQEKWDFTVNVKDVQCYVLEMFPYPSGNIHMGHLRNYTIGDVIARYKRACGLHVFHPIGWDAFGLPAENAALSYNISPQVWTRKNIDNMRSQLKSIGLSYNWDKEFATCDAEYYKYEQEFFLDFLKYGLAYRKESLVNWDPVDQTVLANEQVIDGRGWRSGAIIEKRKLSQWFLKITDFAAELLDDLKSLNQWPEKVKLMQERWIGKSEGVIIDFQIVGINEVLQVFTTSPHTLFGASFIAVSFDHPILKYVNDVQLIQLIDNFDRKDLIDESSINTVEKFGINSGLVARHPLLDVDLPIYVANFVLMNYGTGAVFCCPAHDQRDFDFAKKYSLPIRQVIFPEQNVDLEQEAYVGSGIMGCSGFLDGMTVDDAKKSMIEKLISLGICKKQVYYRLHDWGISRQRYWGCPIPIIYCKKCGIVPVDKKDLPITLPEDIDFTKSGNPLDNHPTWKYTKCPSCGADAKRETDTFDTFFESSWYFAAFCGIGKGIDKDVCNKLLPVDYYIGGIEHAVLHLLYSRFFCRALTRCGYFDVKEPFSSLITQGMVCHSTYLDKYGNYLFPEDGKKMIQEGKYVTVGRAEKMSKSKKNVVHLDDIIDKYGADSARLFILSDTPPERDIEWLDENIEGVSRYLNKLWKMIVDYDQLEQNFVCDNISSDTLEYRINVHKILNDITNDLEFYRFNCAVAKFRELSNVISEMIRLSINHHVVSEAIYILIRVVEPFIPHIAEKLWQIVGGQGMLCNQLWPKVDPQLLIKKNVNIVVQVNGKFIKAVSVPNDIDDDTLKSIALEVAQRRIGNSSVKNIYIIPGRVINIVITKSS.

Positions 34 to 44 (PYPSGNIHMGH) match the 'HIGH' region motif. The 'KMSKS' region motif lies at 592–596 (KMSKS). An ATP-binding site is contributed by K595.

The protein belongs to the class-I aminoacyl-tRNA synthetase family.

It is found in the cytoplasm. It carries out the reaction tRNA(Leu) + L-leucine + ATP = L-leucyl-tRNA(Leu) + AMP + diphosphate. This is Leucine--tRNA ligase from Ehrlichia ruminantium (strain Welgevonden).